The chain runs to 562 residues: MDDNKRPLYLPFAGPAILEAPLINKGSAFTDEERIFFNLEGLLPHVIETIEEQASRAYDQYKNFTNDLDKHIYLRNIQDTNETLYYRLVQNHITEMMPIIYTPTVGMACERFSKDYRRNRGLFISYPNKDRIDDILNNSTRQKVKIIVVTDGERILGLGDQGIGGMGIPIGKLSLYTSCGGISPAYTLPITLDVGTDNPHLLEDPMYMGWRNPRIGGEEYTEFVEAFMQAVHRRWPDALIQFEDFAQKNAMPLLERYKDQYCCFNDDIQGTAAVTVGSLLAACKAAGTQLCQQRITFLGAGSAGCGIAEAIVAQMVSEGIAESQARKQVFMVDRWGMLQSNMPNLLPFQQKLAQDCDDITNWDNFSENISLLDVVNNAKPTILIGVSGAPGLFSEEIIKAMHSHCERPIVFPLSNPTSRVEATPKDILHWTKGQALVATGSPFEPVVVDDITYEIAQCNNSYIFPGIGLGVLAAGAERVSDAMLMASSRALAECSPLSINGEGSLLPQLEDIHKVSKHIAFAVAKVAIEEGHALPTSDELLSQAIEDNFWTAEYRRYKRTSF.

Y101 acts as the Proton donor in catalysis. NAD(+) is bound at residue R154. K172 functions as the Proton acceptor in the catalytic mechanism. E243, D244, and D267 together coordinate a divalent metal cation. The NAD(+) site is built by D267 and N415.

This sequence belongs to the malic enzymes family. In terms of assembly, homotetramer. The cofactor is Mg(2+). Requires Mn(2+) as cofactor.

The enzyme catalyses (S)-malate + NAD(+) = pyruvate + CO2 + NADH. The catalysed reaction is oxaloacetate + H(+) = pyruvate + CO2. This Shewanella piezotolerans (strain WP3 / JCM 13877) protein is NAD-dependent malic enzyme.